The following is a 330-amino-acid chain: Ketol-acid reductoisomerase (NADP(+)) (330 aa).

A KARI N-terminal Rossmann domain is found at 2-181 (MEKYHETDAD…GATRAVVLET (180 aa)). Residues 25-28 (YGSQ), Arg48, Ser52, and 82-85 (DENQ) each bind NADP(+). His107 is an active-site residue. Gly133 is an NADP(+) binding site. Residues 182–327 (TFREETETDL…SELRAMMPQF (146 aa)) form the KARI C-terminal knotted domain. Asp190, Glu194, Glu226, and Glu230 together coordinate Mg(2+). Substrate is bound at residue Ser251.

Belongs to the ketol-acid reductoisomerase family. Mg(2+) serves as cofactor.

It carries out the reaction (2R)-2,3-dihydroxy-3-methylbutanoate + NADP(+) = (2S)-2-acetolactate + NADPH + H(+). It catalyses the reaction (2R,3R)-2,3-dihydroxy-3-methylpentanoate + NADP(+) = (S)-2-ethyl-2-hydroxy-3-oxobutanoate + NADPH + H(+). It participates in amino-acid biosynthesis; L-isoleucine biosynthesis; L-isoleucine from 2-oxobutanoate: step 2/4. The protein operates within amino-acid biosynthesis; L-valine biosynthesis; L-valine from pyruvate: step 2/4. Functionally, involved in the biosynthesis of branched-chain amino acids (BCAA). Catalyzes an alkyl-migration followed by a ketol-acid reduction of (S)-2-acetolactate (S2AL) to yield (R)-2,3-dihydroxy-isovalerate. In the isomerase reaction, S2AL is rearranged via a Mg-dependent methyl migration to produce 3-hydroxy-3-methyl-2-ketobutyrate (HMKB). In the reductase reaction, this 2-ketoacid undergoes a metal-dependent reduction by NADPH to yield (R)-2,3-dihydroxy-isovalerate. This Methanocorpusculum labreanum (strain ATCC 43576 / DSM 4855 / Z) protein is Ketol-acid reductoisomerase (NADP(+)).